The sequence spans 317 residues: Fruit protein pKIWI502 (317 aa).

The tract at residues methionine 1–histidine 29 is disordered. One can recognise an FAD-binding FR-type domain in the interval tyrosine 71–isoleucine 182.

This Actinidia deliciosa (Kiwi) protein is Fruit protein pKIWI502.